The following is a 323-amino-acid chain: Conjugal transfer protein TrbB (323 aa).

151–158 contributes to the ATP binding site; the sequence is GGTGSGKT.

Belongs to the GSP E family.

Its subcellular location is the cytoplasm. The chain is Conjugal transfer protein TrbB (trbB) from Rhizobium radiobacter (Agrobacterium tumefaciens).